A 155-amino-acid chain; its full sequence is Transmembrane protein C1orf162 (155 aa).

Residues 1-28 form a disordered region; sequence MGGNGSTCKPDTERQGTLSTAAPTTSPA. Residues 19 to 28 are compositionally biased toward low complexity; the sequence is STAAPTTSPA. Residues 41-61 traverse the membrane as a helical segment; it reads ILAFCAGVLLTLLLIAFIFLI. The interval 92–114 is disordered; sequence ADHSKPQAPDPHSDPPAKLSSIP. At S140 the chain carries Phosphoserine.

The protein localises to the membrane. This is Transmembrane protein C1orf162 (C1orf162) from Homo sapiens (Human).